The sequence spans 223 residues: MNKFFSINIILWALIGLNFHILSYSLKISISNFPWQWPQEGLETYMIHTDYYLGSILFISFLGGRFASLISQLAYQIIQINIVQLIIFFSKNLHISFLLPNILNQLINLDTNRGTITEYTCIQDHIINNGWLSYFVVNLISYDLFENTLNQYNTQAIDSFFNKSVIFLIRLYIMNILFSLLTSNSLNEWIMYSIKDNFLLLPNQLIIICSVVLLVFLLQFCVY.

It is found in the plastid. It localises to the chloroplast. This is an uncharacterized protein from Mesostigma viride (Green alga).